Reading from the N-terminus, the 342-residue chain is Anthranilate phosphoribosyltransferase (342 aa).

5-phospho-alpha-D-ribose 1-diphosphate is bound by residues Gly79, 82–83 (GD), Thr87, 89–92 (NIST), 107–115 (KHCNQRISS), and Ser119. An anthranilate-binding site is contributed by Gly79. Residue Ser91 participates in Mg(2+) binding. An anthranilate-binding site is contributed by Asn110. Arg165 serves as a coordination point for anthranilate. The Mg(2+) site is built by Asp223 and Glu224.

It belongs to the anthranilate phosphoribosyltransferase family. As to quaternary structure, homodimer. Mg(2+) is required as a cofactor.

The catalysed reaction is N-(5-phospho-beta-D-ribosyl)anthranilate + diphosphate = 5-phospho-alpha-D-ribose 1-diphosphate + anthranilate. It functions in the pathway amino-acid biosynthesis; L-tryptophan biosynthesis; L-tryptophan from chorismate: step 2/5. In terms of biological role, catalyzes the transfer of the phosphoribosyl group of 5-phosphorylribose-1-pyrophosphate (PRPP) to anthranilate to yield N-(5'-phosphoribosyl)-anthranilate (PRA). The protein is Anthranilate phosphoribosyltransferase of Buchnera aphidicola subsp. Acyrthosiphon pisum (strain Tuc7).